Reading from the N-terminus, the 534-residue chain is Echilunin cytochrome P450 monooxygenase (534 aa).

Residues 18–38 (VSPAALSWAVVAIYLGTFFWL) form a helical membrane-spanning segment. Residue cysteine 441 coordinates heme.

It belongs to the cytochrome P450 family. Heme serves as cofactor.

It localises to the membrane. It carries out the reaction preechinulin + reduced [NADPH--hemoprotein reductase] + O2 = neoechinulin A + oxidized [NADPH--hemoprotein reductase] + 2 H2O + H(+). It functions in the pathway secondary metabolite biosynthesis. It participates in alkaloid biosynthesis. Its function is as follows. Cytochrome P450 monooxygenase; part of the gene cluster that mediates the biosynthesis of echinulin family alkaloid. The pathway begins with the biosynthesis of the cyclic dipeptide cyclo-L-Trp-L-Ala (cyclo-TA) by the NRPS echPS via condensation of L-alanine and L-tryptophan. The prenyltransferase echPT1 then catalyzes the first prenylation step, a reverse prenylation reaction at C2, to yield preechinulin. Preechinulin is the substrate of the cytochrome P450 monooxygenase echP450 that catalyzes the formation of the double bond between C10 and C11 to produce neoechulin A. The unique prenyltransferase echPT2 functions as a competitive enzyme with echP450 for preechinulin metabolization and uses preechinulin for effective regiospecific prenylations. Preechinulin is prenylated by echPT2 at C5 or C7. C7-prenylation leads to accumulation of tardioxopiperazine B without further modification by echPT2. In contrast, the C5-prenylated tardioxopiperazine A can be prenylated again by echPT2, predominantly at C7 to form echinulin or less frequently at C4 to give variecolorin L. EchPT2 also accepts neoechilunin A to produce varlecolorin G (prenylation at C5) or isoechinulin A (prenylation at C7). EchPT2 further converts isoechinulin A into dehydroechinulin. Moreover, a yet unidentified enzyme can also convert neoechilunin A into neoechilunin B by introducing a double bond between positions C14 and C17 and thus provides a further substrate to echPT2 for C5 and C7 prenylation. The chain is Echilunin cytochrome P450 monooxygenase from Aspergillus ruber (strain CBS 135680).